A 777-amino-acid chain; its full sequence is Hepatocyte growth factor-regulated tyrosine kinase substrate (777 aa).

Residues 15–143 form the VHS domain; that stretch reads ATSQLLLETD…IMKVEGHVFP (129 aa). The segment at 160 to 220 adopts an FYVE-type zinc-finger fold; the sequence is WVDAEECHRC…VCEPCYEQLN (61 aa). Zn(2+) contacts are provided by C166, C169, C182, C185, C190, and C193. Position 207 is an N6-acetyllysine (K207). Zn(2+)-binding residues include C212 and C215. Phosphotyrosine is present on Y216. The interval 223 to 319 is disordered; the sequence is AEGKATSTTE…SPVNSSAPLA (97 aa). The segment at 225-543 is interaction with SNX1; it reads GKATSTTELP…QRLQEQEKER (319 aa). The UIM domain maps to 258 to 277; it reads QEEEELQLALALSQSEAEEK. The span at 290 to 311 shows a compositional bias: low complexity; sequence PKAEPMPSASSAPPASSLYSSP. Residues Y308, Y329, and Y334 each carry the phosphotyrosine modification. The disordered stretch occupies residues 338–407; sequence KQEEARKSPT…NGESEESHEQ (70 aa). The tract at residues 445–543 is interaction with SNAP25 and TRAK2; it reads SINGMHPQLL…QRLQEQEKER (99 aa). Positions 454-572 are interaction with STAM; the sequence is LELLNQLDER…FPLPYAQLQA (119 aa). The interaction with NF2 stretch occupies residues 480–777; it reads ARGALSALRE…GSEAQLISFD (298 aa). K551 carries the N6-succinyllysine modification. The interval 718 to 777 is disordered; that stretch reads LPSQDASLPPQQPYIAGQQPMYQQMAPSGGPPQQQPPVAQQPQAQGPPAQGSEAQLISFD. Low complexity predominate over residues 753-768; that stretch reads PPVAQQPQAQGPPAQG.

As to quaternary structure, component of the ESCRT-0 complex composed of STAM or STAM2 and HGS. Part of a complex at least composed of HSG, STAM2 (or probably STAM) and EPS15. Interacts with STAM. Interacts with STAM2. Interacts with EPS15; the interaction is direct, calcium-dependent and inhibited by SNAP25. Identified in a complex with STAM and LITAF. Found in a complex with STAM and E3 ligase ITCH and DTX3L. Interacts with E3 ligase DTX3L; the interaction brings together STAM and HSG, promotes their recruitment to early endosomes and decreases STAM and HGS ubiquitination by ITCH. Interacts with NF2; the interaction is direct. Interacts with ubiquitin; the interaction is direct. Interacts with VPS37C. Interacts with SMAD1, SMAD2 and SMAD3. Interacts with TSG101; the interaction mediates the association with the ESCRT-I complex. Interacts with SNAP25; the interaction is direct and decreases with addition of increasing concentrations of free calcium. Interacts with SNX1; the interaction is direct. Component of a 550 kDa membrane complex at least composed of HGS and SNX1 but excluding EGFR. Interacts with TRAK1. Interacts with TRAK2. Component of the CART complex, at least composed of ACTN4, HGS/HRS, MYO5B and TRIM3. Interacts (via UIM domain) with UBQLN1 (via ubiquitin-like domain). Interacts with ARRDC3. Identified in a complex containing at least ARRDC4, AVPR2 and HGS. Interacts with LAPTM4B; promotes HGS ubiquitination. Post-translationally, phosphorylated on Tyr-334. A minor site of phosphorylation on Tyr-329 is detected. Phosphorylation occurs in response to EGF, IL-2, GM-CSF and HGF. In terms of processing, ubiquitinated. Ubiquitinated by ITCH. As to expression, ubiquitous expression in adult and fetal tissues with higher expression in testis and peripheral blood leukocytes.

Its subcellular location is the cytoplasm. The protein localises to the early endosome membrane. It is found in the endosome. It localises to the multivesicular body membrane. Involved in intracellular signal transduction mediated by cytokines and growth factors. When associated with STAM, it suppresses DNA signaling upon stimulation by IL-2 and GM-CSF. Could be a direct effector of PI3-kinase in vesicular pathway via early endosomes and may regulate trafficking to early and late endosomes by recruiting clathrin. May concentrate ubiquitinated receptors within clathrin-coated regions. Involved in down-regulation of receptor tyrosine kinase via multivesicular body (MVBs) when complexed with STAM (ESCRT-0 complex). The ESCRT-0 complex binds ubiquitin and acts as a sorting machinery that recognizes ubiquitinated receptors and transfers them to further sequential lysosomal sorting/trafficking processes. May contribute to the efficient recruitment of SMADs to the activin receptor complex. Involved in receptor recycling via its association with the CART complex, a multiprotein complex required for efficient transferrin receptor recycling but not for EGFR degradation. The sequence is that of Hepatocyte growth factor-regulated tyrosine kinase substrate (HGS) from Homo sapiens (Human).